Consider the following 388-residue polypeptide: Ectopic P granules protein 6 (388 aa).

Residues 1 to 25 are compositionally biased toward basic and acidic residues; that stretch reads MSKKEETIFFRIEKENRPESSKKEE. Residues 1-33 are disordered; sequence MSKKEETIFFRIEKENRPESSKKEEDENSTEEM. One copy of the WD 1 repeat lies at 217-257; it reads AHLTDIAQVALNCQGTLVATGSTKGTVIRVFDARTKGPLYE. An LRRG motif motif is present at residues 258–261; sequence LRRG. One copy of the WD 2 repeat lies at 262 to 301; the sequence is TVQAHLQCMAFSPCSSYLAVASDKGTLHMFGIRDAEPQKK. A required for atg-2 binding region spans residues 265-328; sequence AHLQCMAFSP…LDRPVMAIGF (64 aa).

It belongs to the WD repeat PROPPIN family. As to quaternary structure, interacts with atg-2; the interaction is direct. As to expression, widely expressed in tissues including pharyngeal, muscle and neuronal tissues.

The protein resides in the cytoplasm. It is found in the preautophagosomal structure membrane. Functionally, component of the epg-6/atg-2 complex, which is involved in the generation of autophagosomes from omegasomes and in the distribution of atg-9 and atg-13 during the autophagy-mediated degradation of protein aggregates. Binds to phosphatidylinositols on preautophagosomes, which are early autophagic structures, to promote autophagosome formation. In particular, binds with high affinity to phosphatidylinositols including phosphatidylinositol 3-phosphate (PtdIns(3)P) and phosphatidylinositol 5-phosphate (PtdIns(5)P), but more weakly to phosphatidylinositol 4-phosphate (PtdIns(4)P) and phosphatidylinositol 3,5-bisphosphate (PtdIns(3,5)P2). Involved in autophagy-mediated degradation of ribosomal RNA and ribosomal proteins in lysosomes, which is essential for maintaining nucleotide homeostasis. The protein is Ectopic P granules protein 6 of Caenorhabditis elegans.